Consider the following 155-residue polypeptide: Late embryogenesis abundant protein 2 (155 aa).

A disordered region spans residues 1–155; it reads MTSHDQSYRA…DKDHFPTNRH (155 aa). 2 stretches are compositionally biased toward basic and acidic residues: residues 11-21 and 28-39; these read GEAKGRTEEKT and IEDKAQAAKEKA. Low complexity predominate over residues 40 to 78; that stretch reads QQAAQTAKDKTSQTAQAAKEKTQQTAQAAKDKTQQTTQA. A run of 2 repeats spans residues 53–63 and 64–74. Residues 53 to 74 are 2 X 11 AA approximate tandem repeats of T-A-Q-A-A-K-E-K-T-Q-Q; that stretch reads TAQAAKEKTQQTAQAAKDKTQQ. The span at 79 to 95 shows a compositional bias: basic and acidic residues; that stretch reads TKEKAQDTTGRAKEKGS. A compositionally biased stretch (polar residues) spans 97–120; sequence MGQSTKETAQSGKDNSAGFLQQTG. Residues 144–155 show a composition bias toward basic and acidic residues; sequence DQDKDHFPTNRH.

It belongs to the LEA type 4 family. As to expression, highest expression is found in seeds. No expression detected in adult tissues.

In Cicer arietinum (Chickpea), this protein is Late embryogenesis abundant protein 2.